Consider the following 287-residue polypeptide: ATP synthase gamma chain (287 aa).

The protein belongs to the ATPase gamma chain family. In terms of assembly, F-type ATPases have 2 components, CF(1) - the catalytic core - and CF(0) - the membrane proton channel. CF(1) has five subunits: alpha(3), beta(3), gamma(1), delta(1), epsilon(1). CF(0) has three main subunits: a, b and c.

The protein localises to the cell membrane. Its function is as follows. Produces ATP from ADP in the presence of a proton gradient across the membrane. The gamma chain is believed to be important in regulating ATPase activity and the flow of protons through the CF(0) complex. The sequence is that of ATP synthase gamma chain from Brevibacillus brevis (strain 47 / JCM 6285 / NBRC 100599).